The following is an 830-amino-acid chain: Adhesion G protein-coupled receptor E2 (830 aa).

Positions 1–22 (MRHGHPRLLPGLLMLLLLPLGA) are cleaved as a signal peptide. The Extracellular segment spans residues 23–540 (AAQKTSGCAR…MAHYDVQEED (518 aa)). Positions 26 to 68 (KTSGCARWCPPKSTCVNATTCRCSPGFSSLSGEIFSSPLESCD) constitute an EGF-like 1 domain. 5 cysteine pairs are disulfide-bonded: cysteine 30-cysteine 40, cysteine 34-cysteine 46, cysteine 48-cysteine 67, cysteine 73-cysteine 87, and cysteine 81-cysteine 96. The N-linked (GlcNAc...) asparagine glycan is linked to asparagine 42. An EGF-like 1; calcium-binding domain is found at 69 to 108 (DIDECGPPPLVSCGRLADCQNTEGSYHCMCSPGYALASGA). Asparagine 113 is a glycosylation site (N-linked (GlcNAc...) asparagine). In terms of domain architecture, EGF-like 2; calcium-binding spans 121 to 159 (DVDECQLKPRVCKSRGICTNTKGSYTCKCPPGFELNLGD). 6 disulfides stabilise this stretch: cysteine 125–cysteine 138, cysteine 132–cysteine 147, cysteine 169–cysteine 182, cysteine 176–cysteine 191, cysteine 218–cysteine 231, and cysteine 225–cysteine 240. The 39-residue stretch at 165-203 (DVNECTSGQNPCHNSTHCLNNIGGYECRCRPGWKPVPGS) folds into the EGF-like 3; calcium-binding domain. Asparagine 178 is a glycosylation site (N-linked (GlcNAc...) asparagine). Residues 214–253 (DVDECSSGKHTCHYSTVCINTVGSYKCRCRRGWKPKPRFQ) enclose the EGF-like 4; calcium-binding domain. N-linked (GlcNAc...) asparagine glycans are attached at residues asparagine 258, asparagine 348, asparagine 361, and asparagine 379. The GAIN-B domain maps to 358 to 537 (WTFNASAGTD…AVLMAHYDVQ (180 aa)). 2 disulfide bridges follow: cysteine 489-cysteine 519 and cysteine 507-cysteine 521. The GPS stretch occupies residues 489–537 (CVFWEHSQDECGHWSTRGCTVVDSGDTSTTCQCTHLSSFAVLMAHYDVQ). The chain crosses the membrane as a helical span at residues 541 to 561 (LVLPVITYVGLGLSLLCLLLA). Over 562-576 (ALTFLLCKAIQNTST) the chain is Cytoplasmic. The chain crosses the membrane as a helical span at residues 577 to 597 (SLHLQLLICLFLAHLLFLMAI). The Extracellular segment spans residues 598 to 603 (DRTEIK). A helical transmembrane segment spans residues 604 to 624 (VLCSIIAGALHYLYLASFTWM). Residues 625-651 (LLEGLHLFLTARNLMVVNYSSVSMLMK) are Cytoplasmic-facing. Residues 652–672 (KLMYPVGYGVPTLIVAISAAS) traverse the membrane as a helical segment. At 673 to 690 (RSHLYGTRTRCWLNPEER) the chain is on the extracellular side. A helical transmembrane segment spans residues 691–711 (FIWSFLGPVCTIFSVNLGFFL). The Cytoplasmic segment spans residues 712–744 (MTLWILKSKLSSLNSDVSTLQNTRMLTFKAIAQ). The helical transmembrane segment at 745 to 765 (LFILGCTWCLGILQVGPAAHV) threads the bilayer. The Extracellular portion of the chain corresponds to 766 to 767 (MA). The helical transmembrane segment at 768 to 788 (YLFTIINSLQGVFIFLVYCLL) threads the bilayer. Residues 789–830 (SQQVREEYGKWFKGIRKTRAESEKYTLSSRAMSDVNKPMMVN) are Cytoplasmic-facing.

The protein belongs to the G-protein coupled receptor 2 family. Adhesion G-protein coupled receptor (ADGR) subfamily. In terms of assembly, forms a heterodimer, consisting of a large extracellular region non-covalently linked to a seven-transmembrane moiety. Interacts with chondroitin sulfate; the interaction with chondroitin sulfate is calcium-dependent. Interacts with CD55. In terms of processing, autoproteolytically cleaved into 2 subunits, an extracellular alpha subunit and a seven-transmembrane beta subunit.

It localises to the cell membrane. It is found in the cell projection. Its subcellular location is the ruffle membrane. In terms of biological role, cell surface receptor that binds to the chondroitin sulfate moiety of glycosaminoglycan chains and promotes cell attachment. Promotes granulocyte chemotaxis, degranulation and adhesion. In macrophages, promotes the release of inflammatory cytokines, including IL8 and TNF. Signals probably through G-proteins. The polypeptide is Adhesion G protein-coupled receptor E2 (ADGRE2) (Canis lupus familiaris (Dog)).